Here is a 56-residue protein sequence, read N- to C-terminus: MAVPKKKTSKSKRNQRHAVWKAKAATAAQRAMSIGKSVLSGRAQGFVYPVADDSED.

The protein belongs to the bacterial ribosomal protein bL32 family.

This chain is Large ribosomal subunit protein bL32, found in Synechococcus sp. (strain CC9311).